Here is a 305-residue protein sequence, read N- to C-terminus: Fructose-bisphosphate aldolase (305 aa).

Serine 49 provides a ligand contact to D-glyceraldehyde 3-phosphate. Aspartate 80 functions as the Proton donor in the catalytic mechanism. Histidine 81, aspartate 102, glutamate 132, and histidine 178 together coordinate Zn(2+). Glycine 179 serves as a coordination point for dihydroxyacetone phosphate. Histidine 208 provides a ligand contact to Zn(2+). Residues 209–211 (GAS) and 251–254 (NTDT) each bind dihydroxyacetone phosphate.

This sequence belongs to the class II fructose-bisphosphate aldolase family. Homotetramer. Requires Zn(2+) as cofactor.

The enzyme catalyses beta-D-fructose 1,6-bisphosphate = D-glyceraldehyde 3-phosphate + dihydroxyacetone phosphate. The protein operates within carbohydrate degradation; glycolysis; D-glyceraldehyde 3-phosphate and glycerone phosphate from D-glucose: step 4/4. Functionally, catalyzes the aldol condensation of dihydroxyacetone phosphate (DHAP or glycerone-phosphate) with glyceraldehyde 3-phosphate (G3P) to form fructose 1,6-bisphosphate (FBP) in gluconeogenesis and the reverse reaction in glycolysis. This chain is Fructose-bisphosphate aldolase, found in Thermus caldophilus.